The primary structure comprises 383 residues: tRNA (guanine-N(7)-)-methyltransferase non-catalytic subunit wuho (383 aa).

WD repeat units lie at residues 61–101, 105–144, 148–187, 191–231, and 289–329; these read NLEV…ALLL, ALAR…APPK, GHLS…DIHS, GHKE…EVLQ, and AGSW…QAES.

This sequence belongs to the WD repeat TRM82 family. As to quaternary structure, forms a heterodimer with the catalytic subunit Mettl1. Interacts with mei-P26 and weakly interacts with bgcn; required for the function or formation of the mei-P26-bgcn-bam-sxl complex. Interacts with nanos; may be involved in mei-P26-dependent derepression of the BMP signaling pathway. Interacts with Myc; the interaction may be mediated by mei-P26 and may be involved in the regulation of ribosome biogenesis. As to expression, in testis, it is present at high level in hub cells, a niche for germline stem cells of testis. Ubiquitously expressed in all testicular cells throughout spermatogenesis. Ubiquitously expressed in all germline and somatic cells of the ovary.

The protein resides in the nucleus. It is found in the cytoplasm. It participates in tRNA modification; N(7)-methylguanine-tRNA biosynthesis. Its function is as follows. Required for the Mettl1-dependent formation of N(7)-methylguanine at position 46 (m7G46) in tRNA. In the Mettl1-wuho methyltransferase complex, it is required to stabilize and induce conformational changes of the catalytic subunit. Required for binding of nanos mRNA and repression of translation by the mei-P26-bgcn-bam-sxl complex. May cooperate with mei-P26 and nanos to derepress the BMP signaling pathway. May cooperate with mei-P26 to suppress expression of a subset of microRNAs. May cooperate with mei-P26 to regulate bam expression levels in germline cells during gametogenesis. Required to promote mitosis to meiosis transition during gametogenesis. May regulate germline cell division in part by regulating ribosome biogenesis. This chain is tRNA (guanine-N(7)-)-methyltransferase non-catalytic subunit wuho, found in Drosophila mojavensis (Fruit fly).